The primary structure comprises 349 residues: D-alanine--D-alanine ligase (349 aa).

Residues 132–335 form the ATP-grasp domain; it reads KHVFEAVGVP…YSDLIEKLVD (204 aa). Position 162–217 (162–217) interacts with ATP; that stretch reads VEKLDFPVFVKPANMGSSVGISKVDDLADLQPALSEAYKYDNRVVIEQGVDAREIE. Residues Asp-289, Glu-302, and Asn-304 each contribute to the Mg(2+) site.

This sequence belongs to the D-alanine--D-alanine ligase family. The cofactor is Mg(2+). Mn(2+) serves as cofactor.

It localises to the cytoplasm. It catalyses the reaction 2 D-alanine + ATP = D-alanyl-D-alanine + ADP + phosphate + H(+). It participates in cell wall biogenesis; peptidoglycan biosynthesis. Its function is as follows. Cell wall formation. The protein is D-alanine--D-alanine ligase of Lactococcus lactis subsp. cremoris (strain MG1363).